Reading from the N-terminus, the 433-residue chain is Adenylosuccinate synthetase (433 aa).

GTP-binding positions include 11–17 (GDEGKGK) and 39–41 (GHT). The active-site Proton acceptor is Asp-12. Positions 12 and 39 each coordinate Mg(2+). Residues 12–15 (DEGK), 37–40 (NAGH), Thr-134, Arg-148, Asn-230, Thr-245, and Arg-309 each bind IMP. His-40 acts as the Proton donor in catalysis. Residue 305–311 (VTTGRKR) participates in substrate binding. GTP-binding positions include Arg-311, 337 to 339 (KLD), and 419 to 421 (GTG).

Belongs to the adenylosuccinate synthetase family. As to quaternary structure, homodimer. Mg(2+) is required as a cofactor.

The protein resides in the cytoplasm. The enzyme catalyses IMP + L-aspartate + GTP = N(6)-(1,2-dicarboxyethyl)-AMP + GDP + phosphate + 2 H(+). Its pathway is purine metabolism; AMP biosynthesis via de novo pathway; AMP from IMP: step 1/2. Its function is as follows. Plays an important role in the de novo pathway and in the salvage pathway of purine nucleotide biosynthesis. Catalyzes the first committed step in the biosynthesis of AMP from IMP. In Saccharomyces cerevisiae (strain Lalvin EC1118 / Prise de mousse) (Baker's yeast), this protein is Adenylosuccinate synthetase.